The chain runs to 474 residues: Mitogen-activated protein kinase pmk-3 (474 aa).

Low complexity predominate over residues 1–13 (MASVPSSSSLPVS). The tract at residues 1–90 (MASVPSSSSL…EEEEDILSKP (90 aa)) is disordered. Positions 30–48 (KRSNNQSQPPESYEPNTWL) are enriched in polar residues. The segment covering 52–69 (REQEQQKKLAAENIKKQS) has biased composition (basic and acidic residues). One can recognise a Protein kinase domain in the interval 114–419 (YDVEPNSIEY…VEEAIQHPYL (306 aa)). ATP contacts are provided by residues 124-132 (LGGGSFGNV) and K150. The Proton acceptor role is filled by D252. Position 285 is a phosphothreonine (T285). Residues 285 to 287 (TQY) carry the TXY motif. Position 287 is a phosphotyrosine (Y287).

This sequence belongs to the protein kinase superfamily. CMGC Ser/Thr protein kinase family. MAP kinase subfamily. In terms of assembly, interacts with mak-2. May interact with vhp-1. May interact with uev-3. Mg(2+) serves as cofactor. Dually phosphorylated on Thr-285 and Tyr-287, which activates the enzyme. In terms of tissue distribution, expressed throughout the intestine.

Its subcellular location is the nucleus. The protein resides in the cytoplasm. The protein localises to the cell projection. It localises to the axon. It is found in the dendrite. Its subcellular location is the cilium. It catalyses the reaction L-seryl-[protein] + ATP = O-phospho-L-seryl-[protein] + ADP + H(+). It carries out the reaction L-threonyl-[protein] + ATP = O-phospho-L-threonyl-[protein] + ADP + H(+). Activated by phosphorylation on threonine and tyrosine. Its function is as follows. Responds to activation by environmental stress and pro-inflammatory cytokines by phosphorylating downstream targets. Involved in axon regeneration after injury, probably downstream of dlk-1 and mkk-4 and upstream of mak-2. May phosphorylate mak-2. Plays a role in cilium length regulation, possibly by reducing rab-5 mediated endocytosis. Plays a role in the formation of muscle connections, also called muscle arm extensions, between the body wall and the motor axons in the dorsal and ventral cord. This chain is Mitogen-activated protein kinase pmk-3 (pmk-3), found in Caenorhabditis elegans.